The sequence spans 193 residues: Orotate phosphoribosyltransferase (193 aa).

Residues Arg85, Lys89, and 111-119 (DDVLTTGKS) each bind 5-phospho-alpha-D-ribose 1-diphosphate. 2 residues coordinate orotate: Thr115 and Arg143.

Belongs to the purine/pyrimidine phosphoribosyltransferase family. PyrE subfamily. In terms of assembly, homodimer. The cofactor is Mg(2+).

The catalysed reaction is orotidine 5'-phosphate + diphosphate = orotate + 5-phospho-alpha-D-ribose 1-diphosphate. Its pathway is pyrimidine metabolism; UMP biosynthesis via de novo pathway; UMP from orotate: step 1/2. Catalyzes the transfer of a ribosyl phosphate group from 5-phosphoribose 1-diphosphate to orotate, leading to the formation of orotidine monophosphate (OMP). The sequence is that of Orotate phosphoribosyltransferase from Pyrobaculum aerophilum (strain ATCC 51768 / DSM 7523 / JCM 9630 / CIP 104966 / NBRC 100827 / IM2).